The chain runs to 240 residues: Protein GrpE (240 aa).

Disordered regions lie at residues 1-54 (MSGD…NEAR) and 206-240 (VSMGPGPQDGASSQPAEAPAADAPAEDSGSGDGNG). A compositionally biased stretch (low complexity) spans 215–233 (GASSQPAEAPAADAPAEDS).

This sequence belongs to the GrpE family. As to quaternary structure, homodimer.

The protein localises to the cytoplasm. Participates actively in the response to hyperosmotic and heat shock by preventing the aggregation of stress-denatured proteins, in association with DnaK and GrpE. It is the nucleotide exchange factor for DnaK and may function as a thermosensor. Unfolded proteins bind initially to DnaJ; upon interaction with the DnaJ-bound protein, DnaK hydrolyzes its bound ATP, resulting in the formation of a stable complex. GrpE releases ADP from DnaK; ATP binding to DnaK triggers the release of the substrate protein, thus completing the reaction cycle. Several rounds of ATP-dependent interactions between DnaJ, DnaK and GrpE are required for fully efficient folding. The polypeptide is Protein GrpE (Synechococcus sp. (strain WH7803)).